The following is a 68-amino-acid chain: Large ribosomal subunit protein uL29 (68 aa).

It belongs to the universal ribosomal protein uL29 family.

This Nitrobacter hamburgensis (strain DSM 10229 / NCIMB 13809 / X14) protein is Large ribosomal subunit protein uL29.